Reading from the N-terminus, the 226-residue chain is PKHD-type hydroxylase Pput_0892 (226 aa).

Residues 78-178 (KVFPPLINCY…RYAAFFWTQS (101 aa)) enclose the Fe2OG dioxygenase domain. The Fe cation site is built by H96, D98, and H159. Position 169 (R169) interacts with 2-oxoglutarate.

The cofactor is Fe(2+). L-ascorbate is required as a cofactor.

The sequence is that of PKHD-type hydroxylase Pput_0892 from Pseudomonas putida (strain ATCC 700007 / DSM 6899 / JCM 31910 / BCRC 17059 / LMG 24140 / F1).